A 458-amino-acid chain; its full sequence is Retinoic acid receptor alpha (458 aa).

The segment at 1 to 86 is modulating; the sequence is MASNGGSCPS…PPPLPRIYKP (86 aa). Positions 54–68 are enriched in polar residues; that stretch reads TPSPATIETQSTSSE. Residues 54-76 form a disordered region; that stretch reads TPSPATIETQSTSSEEIVPSPPS. 2 consecutive NR C4-type zinc fingers follow at residues 87–107 and 123–147; these read CFVC…CEGC and CHRD…LQKC. Residues 87-152 constitute a DNA-binding region (nuclear receptor); it reads CFVCQDKSSG…RLQKCFEVGM (66 aa). Residues 153–182 form a hinge region; that stretch reads SKESVRNDRNKKKKQEAPKQECTESYIITP. Positions 183–417 constitute an NR LBD domain; that stretch reads EVEDLVEKVR…PLIQEMLENS (235 aa). Positions 408-416 match the 9aaTAD motif; that stretch reads PLIQEMLEN. Residues 417–458 are disordered; it reads SEGLDSLTGQPPRASSLAPPPGSCSPSLSPSSNRSSPTSHSP. A compositionally biased stretch (low complexity) spans 440–458; sequence CSPSLSPSSNRSSPTSHSP.

This sequence belongs to the nuclear hormone receptor family. NR1 subfamily. As to quaternary structure, heterodimer; with an rxr molecule. Binds DNA preferentially as a rar/rxr heterodimer. As to expression, expressed in forelimb, in the distal forelimb blastema, kidney, liver and hindlimb blastemal mesenchymal cells.

It localises to the nucleus. In terms of biological role, receptor for retinoic acid. Retinoic acid receptors bind as heterodimers to their target response elements in response to their ligands, all-trans or 9-cis retinoic acid, and regulate gene expression in various biological processes. The rar/rxr heterodimers bind to the retinoic acid response elements (RARE) composed of tandem 5'-AGGTCA-3' sites known as DR1-DR5. Retinoic acid signaling appears to be involved in specifying proximal-distal axis in limb regeneration. The chain is Retinoic acid receptor alpha (RARA) from Notophthalmus viridescens (Eastern newt).